The primary structure comprises 231 residues: MAIYKTKNTLKKMNLDYSFRTNSTLVSNSEMFSLLYADTTLQKYYKNIVCQDLCLKQDYKNIMECVSLNKIVCNTSSKHYAGEKESILPAFTALEMITGQKPKYTCAKKSISTFKLRQNQILGCKNSLRGNTMYRFLEKYISIVSTRIKDWSENYSSSNKSNSLTTAYNKDYVVLNSNLFPELQQHDELFQNVTGIEISFSTLSNNVKTSTKTSRYKKDGILLYSAFQMPK.

It belongs to the universal ribosomal protein uL5 family.

The protein localises to the mitochondrion. The chain is Large ribosomal subunit protein uL5m (RPL5) from Prototheca wickerhamii.